The primary structure comprises 255 residues: Small ribosomal subunit protein eS1 (255 aa).

The span at 1 to 18 (MAVGKNKRLSKGKKGLKK) shows a compositional bias: basic residues. Residues 1 to 28 (MAVGKNKRLSKGKKGLKKRTQDPFSRKD) form a disordered region. N-acetylalanine; partial is present on Ala2. The span at 19–28 (RTQDPFSRKD) shows a compositional bias: basic and acidic residues.

This sequence belongs to the eukaryotic ribosomal protein eS1 family. Component of the small ribosomal subunit. Mature ribosomes consist of a small (40S) and a large (60S) subunit. The 40S subunit contains about 33 different proteins and 1 molecule of RNA (18S). The 60S subunit contains about 49 different proteins and 3 molecules of RNA (25S, 5.8S and 5S).

It localises to the cytoplasm. This Ajellomyces capsulatus (strain G186AR / H82 / ATCC MYA-2454 / RMSCC 2432) (Darling's disease fungus) protein is Small ribosomal subunit protein eS1.